A 502-amino-acid polypeptide reads, in one-letter code: Mannitol 2-dehydrogenase (502 aa).

Residue 37–48 coordinates NAD(+); that stretch reads IVHVGVGGFHRA.

Belongs to the mannitol dehydrogenase family. Monomer.

It carries out the reaction D-mannitol + NAD(+) = D-fructose + NADH + H(+). In terms of biological role, catalyzes the NAD(H)-dependent interconversion of D-fructose and D-mannitol in the mannitol metabolic pathway. The protein is Mannitol 2-dehydrogenase of Aspergillus terreus (strain NIH 2624 / FGSC A1156).